The following is a 347-amino-acid chain: Protein RecA (347 aa).

65-72 (GPESSGKT) lines the ATP pocket.

This sequence belongs to the RecA family.

It is found in the cytoplasm. Its function is as follows. Can catalyze the hydrolysis of ATP in the presence of single-stranded DNA, the ATP-dependent uptake of single-stranded DNA by duplex DNA, and the ATP-dependent hybridization of homologous single-stranded DNAs. It interacts with LexA causing its activation and leading to its autocatalytic cleavage. This chain is Protein RecA, found in Aliivibrio salmonicida (strain LFI1238) (Vibrio salmonicida (strain LFI1238)).